Consider the following 317-residue polypeptide: MKPVFLDFEQPIAELTNKIDELRFVQDESAVDISDEIHRLQKKSNDLTKSIFSKLTPAQISQVSRHPQRPYTLDYIDALFTDFEELHGDRHFADDHAIVGGLARFNGQSVVVVGHQKGRDTKEKIRRNFGMPRPEGYRKALRLMKTAEKFGLPVMTFIDTPGAYPGIGAEERGQSEAIGKNLYELTRLRVPVLCTVIGEGGSGGALAVAVGDYVNMLQYSTYSVISPEGCASILWKTAEKAADAAQALGITADRLQKLDLVDTVIKEPLGGAHRDFGQTMKNVKAVLEKQLHEAQSIPLADLLSRRFDRIMAYGKFS.

Residues Arg-39–Glu-293 form the CoA carboxyltransferase C-terminal domain.

This sequence belongs to the AccA family. As to quaternary structure, acetyl-CoA carboxylase is a heterohexamer composed of biotin carboxyl carrier protein (AccB), biotin carboxylase (AccC) and two subunits each of ACCase subunit alpha (AccA) and ACCase subunit beta (AccD).

It localises to the cytoplasm. It catalyses the reaction N(6)-carboxybiotinyl-L-lysyl-[protein] + acetyl-CoA = N(6)-biotinyl-L-lysyl-[protein] + malonyl-CoA. It functions in the pathway lipid metabolism; malonyl-CoA biosynthesis; malonyl-CoA from acetyl-CoA: step 1/1. Component of the acetyl coenzyme A carboxylase (ACC) complex. First, biotin carboxylase catalyzes the carboxylation of biotin on its carrier protein (BCCP) and then the CO(2) group is transferred by the carboxyltransferase to acetyl-CoA to form malonyl-CoA. The sequence is that of Acetyl-coenzyme A carboxylase carboxyl transferase subunit alpha from Neisseria gonorrhoeae (strain NCCP11945).